A 101-amino-acid polypeptide reads, in one-letter code: NADH-quinone oxidoreductase subunit K (101 aa).

3 consecutive transmembrane segments (helical) span residues 4–24 (VGHYLAVSAVLFTLGVLGIFI), 29–49 (IIVILMAIELILLAVNINLVA), and 65–85 (FVLTVAAGEAAIGLAILVIYF).

It belongs to the complex I subunit 4L family. As to quaternary structure, NDH-1 is composed of 14 different subunits. Subunits NuoA, H, J, K, L, M, N constitute the membrane sector of the complex.

It localises to the cell inner membrane. The catalysed reaction is a quinone + NADH + 5 H(+)(in) = a quinol + NAD(+) + 4 H(+)(out). Functionally, NDH-1 shuttles electrons from NADH, via FMN and iron-sulfur (Fe-S) centers, to quinones in the respiratory chain. The immediate electron acceptor for the enzyme in this species is believed to be ubiquinone. Couples the redox reaction to proton translocation (for every two electrons transferred, four hydrogen ions are translocated across the cytoplasmic membrane), and thus conserves the redox energy in a proton gradient. The protein is NADH-quinone oxidoreductase subunit K of Sphingopyxis alaskensis (strain DSM 13593 / LMG 18877 / RB2256) (Sphingomonas alaskensis).